A 314-amino-acid chain; its full sequence is Ribosomal protein uL3 glutamine methyltransferase (314 aa).

It belongs to the protein N5-glutamine methyltransferase family. PrmB subfamily.

It catalyses the reaction L-glutaminyl-[ribosomal protein uL3] + S-adenosyl-L-methionine = N(5)-methyl-L-glutaminyl-[ribosomal protein uL3] + S-adenosyl-L-homocysteine + H(+). Its function is as follows. Methylates large ribosomal subunit protein uL3 on a specific glutamine residue. The sequence is that of Ribosomal protein uL3 glutamine methyltransferase from Haemophilus influenzae (strain ATCC 51907 / DSM 11121 / KW20 / Rd).